A 677-amino-acid chain; its full sequence is DNA polymerase epsilon subunit B (677 aa).

This sequence belongs to the DNA polymerase epsilon subunit B family. Heterotetramer. Consists of four subunits: POL2, DPB2, DPB3 and DPB4.

It localises to the nucleus. Functionally, as accessory component of the DNA polymerase epsilon (DNA polymerase II) participates in chromosomal DNA replication. The chain is DNA polymerase epsilon subunit B (DPB2) from Eremothecium gossypii (strain ATCC 10895 / CBS 109.51 / FGSC 9923 / NRRL Y-1056) (Yeast).